Reading from the N-terminus, the 47-residue chain is Large ribosomal subunit protein bL34 (47 aa).

Belongs to the bacterial ribosomal protein bL34 family.

The sequence is that of Large ribosomal subunit protein bL34 (rpmH) from Mycobacterium leprae (strain TN).